The following is a 383-amino-acid chain: tRNA(Met) cytidine acetate ligase (383 aa).

Residues 7–20, G101, N153, and 178–179 each bind ATP; these read IAEF…HEFL and RI.

It belongs to the TmcAL family.

The protein localises to the cytoplasm. It carries out the reaction cytidine(34) in elongator tRNA(Met) + acetate + ATP = N(4)-acetylcytidine(34) in elongator tRNA(Met) + AMP + diphosphate. Catalyzes the formation of N(4)-acetylcytidine (ac(4)C) at the wobble position of elongator tRNA(Met), using acetate and ATP as substrates. First activates an acetate ion to form acetyladenylate (Ac-AMP) and then transfers the acetyl group to tRNA to form ac(4)C34. The sequence is that of tRNA(Met) cytidine acetate ligase from Lactobacillus helveticus (strain DPC 4571).